Consider the following 237-residue polypeptide: Demethylmenaquinone methyltransferase (237 aa).

Residues T58, D79, and 106-107 (NA) contribute to the S-adenosyl-L-methionine site.

This sequence belongs to the class I-like SAM-binding methyltransferase superfamily. MenG/UbiE family.

The enzyme catalyses a 2-demethylmenaquinol + S-adenosyl-L-methionine = a menaquinol + S-adenosyl-L-homocysteine + H(+). The protein operates within quinol/quinone metabolism; menaquinone biosynthesis; menaquinol from 1,4-dihydroxy-2-naphthoate: step 2/2. Methyltransferase required for the conversion of demethylmenaquinol (DMKH2) to menaquinol (MKH2). This Bacillus cereus (strain B4264) protein is Demethylmenaquinone methyltransferase.